Here is a 159-residue protein sequence, read N- to C-terminus: Phosphopantetheine adenylyltransferase (159 aa).

Residue His16 coordinates ATP. Positions 40, 72, and 86 each coordinate substrate. ATP contacts are provided by residues 87-89 (GLR), Glu97, and 122-128 (YQYLSAS).

The protein belongs to the bacterial CoaD family. Homohexamer. It depends on Mg(2+) as a cofactor.

The protein localises to the cytoplasm. The catalysed reaction is (R)-4'-phosphopantetheine + ATP + H(+) = 3'-dephospho-CoA + diphosphate. It functions in the pathway cofactor biosynthesis; coenzyme A biosynthesis; CoA from (R)-pantothenate: step 4/5. Functionally, reversibly transfers an adenylyl group from ATP to 4'-phosphopantetheine, yielding dephospho-CoA (dPCoA) and pyrophosphate. This chain is Phosphopantetheine adenylyltransferase, found in Dehalococcoides mccartyi (strain ATCC BAA-2266 / KCTC 15142 / 195) (Dehalococcoides ethenogenes (strain 195)).